The sequence spans 180 residues: Type IV major pilin protein PilE1 (180 aa).

The propeptide occupies 1–7; it reads MNTLQKG. Position 8 is an N-methylphenylalanine (phenylalanine 8). A helical transmembrane segment spans residues 8–28; the sequence is FTLIELMIVIAIVGILAAVAL. Residue serine 70 is glycosylated (O-linked (GlcNAc...) serine). A disulfide bridge links cysteine 128 with cysteine 160.

This sequence belongs to the N-Me-Phe pilin family. In terms of assembly, the pili are polar flexible filaments of about 5.4 nanometers diameter and 2.5 micrometers average length; they consist of only a single polypeptide chain arranged in a helical configuration of five subunits per turn in the assembled pilus.

It localises to the fimbrium. Its subcellular location is the membrane. Functionally, major component of the type IV pilus (T4P) that plays a role in cellular adherence, microcolony formation, resistance to neutrophil mediated killing, twitching motility as well as transformation. Mediates the attachment and the formation of bacterial microcolonies on host epithelial cells. Mechanistically, pili retractation induces host NF-kappa-B activation in infected cells, which is temporally associated with the formation of gonococcal microcolonies. The sequence is that of Type IV major pilin protein PilE1 (pilE1) from Neisseria gonorrhoeae.